Here is an 84-residue protein sequence, read N- to C-terminus: Cell division topological specificity factor (84 aa).

It belongs to the MinE family.

In terms of biological role, prevents the cell division inhibition by proteins MinC and MinD at internal division sites while permitting inhibition at polar sites. This ensures cell division at the proper site by restricting the formation of a division septum at the midpoint of the long axis of the cell. This Ectopseudomonas mendocina (strain ymp) (Pseudomonas mendocina) protein is Cell division topological specificity factor.